Reading from the N-terminus, the 196-residue chain is Cilia- and flagella-associated protein 107 (196 aa).

2 mn regions span residues 46–61 (TPQT…FPGH) and 96–108 (ISTY…RHNY). The interval 168–196 (YPRPPAGAMSRREHAIPVPPPRLQPVPHF) is disordered. The segment covering 184-196 (PVPPPRLQPVPHF) has biased composition (pro residues).

As to quaternary structure, microtubule inner protein component of sperm flagellar doublet microtubules. Expressed in trachea multiciliated cells.

It localises to the cytoplasm. The protein localises to the cytoskeleton. It is found in the cilium axoneme. The protein resides in the flagellum axoneme. Its function is as follows. Microtubule inner protein (MIP) part of the dynein-decorated doublet microtubules (DMTs) in cilia axoneme, which is required for motile cilia beating. This chain is Cilia- and flagella-associated protein 107, found in Bos taurus (Bovine).